The chain runs to 229 residues: Uracil-DNA glycosylase (229 aa).

The active-site Proton acceptor is D70.

The protein belongs to the uracil-DNA glycosylase (UDG) superfamily. UNG family.

The protein resides in the cytoplasm. The enzyme catalyses Hydrolyzes single-stranded DNA or mismatched double-stranded DNA and polynucleotides, releasing free uracil.. In terms of biological role, excises uracil residues from the DNA which can arise as a result of misincorporation of dUMP residues by DNA polymerase or due to deamination of cytosine. In Chlamydia abortus (strain DSM 27085 / S26/3) (Chlamydophila abortus), this protein is Uracil-DNA glycosylase.